A 163-amino-acid polypeptide reads, in one-letter code: Troponin C (163 aa).

Serine 1 bears the N-acetylserine mark. 4 consecutive EF-hand domains span residues 14-49 (EQIS…LGMS), 50-85 (ISRE…AMQD), 90-125 (IPDD…CAGD), and 127-162 (LTDD…LKVR). Lysine 20 is subject to N6,N6-dimethyllysine; alternate. Lysine 20 is subject to N6-methyllysine; alternate. Residues aspartate 27, aspartate 29, aspartate 33, glutamate 38, aspartate 63, aspartate 65, serine 67, threonine 69, glutamate 74, aspartate 103, asparagine 105, aspartate 107, and glutamate 114 each contribute to the Ca(2+) site.

Belongs to the troponin C family.

Troponin is the central regulatory protein of striated muscle contraction. Tn consists of three components: Tn-I which is the inhibitor of actomyosin ATPase, Tn-T which contains the binding site for tropomyosin and Tn-C. The binding of calcium to Tn-C abolishes the inhibitory action of Tn on actin filaments. In Branchiostoma lanceolatum (Common lancelet), this protein is Troponin C.